Reading from the N-terminus, the 118-residue chain is MARVKRGVVARARHKKILKQAKGYYGARSRVYRVAFQAVIKAGQYAYRDRRQRKRQFRQLWIARINAAARQNGLSYSRFIDGLKKASIEIDRKILADIAVFDKVAFAALVEKAKSALA.

Belongs to the bacterial ribosomal protein bL20 family.

Binds directly to 23S ribosomal RNA and is necessary for the in vitro assembly process of the 50S ribosomal subunit. It is not involved in the protein synthesizing functions of that subunit. The protein is Large ribosomal subunit protein bL20 of Photorhabdus laumondii subsp. laumondii (strain DSM 15139 / CIP 105565 / TT01) (Photorhabdus luminescens subsp. laumondii).